Consider the following 586-residue polypeptide: A-type ATP synthase subunit A (586 aa).

233-240 (GPFGSGKT) is an ATP binding site.

This sequence belongs to the ATPase alpha/beta chains family. Has multiple subunits with at least A(3), B(3), C, D, E, F, H, I and proteolipid K(x).

Its subcellular location is the cell membrane. It carries out the reaction ATP + H2O + 4 H(+)(in) = ADP + phosphate + 5 H(+)(out). Functionally, component of the A-type ATP synthase that produces ATP from ADP in the presence of a proton gradient across the membrane. The A chain is the catalytic subunit. The protein is A-type ATP synthase subunit A of Methanococcus aeolicus (strain ATCC BAA-1280 / DSM 17508 / OCM 812 / Nankai-3).